The primary structure comprises 806 residues: Leucine--tRNA ligase (806 aa).

A 'HIGH' region motif is present at residues 40–51; that stretch reads PYPSGTGLHVGH. A 'KMSKS' region motif is present at residues 576-580; sequence KMSKS. An ATP-binding site is contributed by Lys-579.

Belongs to the class-I aminoacyl-tRNA synthetase family.

It localises to the cytoplasm. It carries out the reaction tRNA(Leu) + L-leucine + ATP = L-leucyl-tRNA(Leu) + AMP + diphosphate. The polypeptide is Leucine--tRNA ligase (Prosthecochloris aestuarii (strain DSM 271 / SK 413)).